The following is a 1321-amino-acid chain: Indole-3-acetaldehyde oxidase (1321 aa).

The 2Fe-2S ferredoxin-type domain occupies 1–90 (MSLVFAINGQ…HCNITTSEGL (90 aa)). 3 residues coordinate [2Fe-2S] cluster: Cys42, Cys47, and Cys50. Positions 215–404 (VDSGMYRWCS…LSIEIPFWHS (190 aa)) constitute an FAD-binding PCMH-type domain.

The protein belongs to the xanthine dehydrogenase family. Aldehyde oxidases (AO) are homodimers and heterodimers of AO subunits. AO-beta is a AAO1-AAO2 heterodimer; AO-gamma is a AAO2 homodimer. AAO2 also forms a dimer with AAO3. [2Fe-2S] cluster is required as a cofactor. Requires FAD as cofactor. Mo-molybdopterin serves as cofactor. Weakly expressed in roots, leaves and seedlings. In seedlings, mostly expressed in lower part of hypocotyls. Detectable in seeds and mature siliques at low levels.

It localises to the cytoplasm. It carries out the reaction indole-3-acetaldehyde + O2 + H2O = (indol-3-yl)acetate + H2O2 + H(+). With respect to regulation, strongly inhibited by iodoacetate, potassium cyanide (KCN), 2-mercaptoethanol, dithiothreitol (DTT), p-chloromercuribenzoate, menadione and estradiol. Weakly inhibited by 4'-(9-acridinylamino)methanesulfon-m-anisidine (mAMSA) and tritonX-100. Not affected by allopurinol. In higher plant aldehyde oxidases (AO) appear to be homo- and heterodimeric assemblies of AO subunits with probably different physiological functions. In vitro, AO-gamma uses heptaldehyde, benzaldehyde, naphthaldehyde and cinnamaldehyde as substrates; AO-beta uses indole-3-acetaldehyde (IAAld), indole-3-aldehyde (IAld) and naphtaldehyde; the AAO2-AAO3 dimer uses abscisic aldehyde. This is Indole-3-acetaldehyde oxidase (AAO2) from Arabidopsis thaliana (Mouse-ear cress).